The primary structure comprises 409 residues: Adenosine deaminase (409 aa).

His65, His67, His207, and Asp314 together coordinate Zn(2+).

The protein belongs to the metallo-dependent hydrolases superfamily. Zn(2+) serves as cofactor.

The catalysed reaction is adenosine + H2O + H(+) = inosine + NH4(+). Functionally, catalyzes the deamination of adenosine into inosine. Is also able to deaminate adenine, but with considerably less efficiency. Is not active toward 6-chloroadenine. This chain is Adenosine deaminase, found in Helicobacter pylori (strain ATCC 700392 / 26695) (Campylobacter pylori).